Consider the following 518-residue polypeptide: Type II methyltransferase M.HindII (518 aa).

The protein belongs to the N(4)/N(6)-methyltransferase family.

The catalysed reaction is a 2'-deoxyadenosine in DNA + S-adenosyl-L-methionine = an N(6)-methyl-2'-deoxyadenosine in DNA + S-adenosyl-L-homocysteine + H(+). A gamma subtype methylase, recognizes the double-stranded sequence 5'-GTYRAC-3', methylates A-5 on both strands, and protects the DNA from cleavage by the HindII endonuclease. The protein is Type II methyltransferase M.HindII (hindIIM) of Haemophilus influenzae (strain ATCC 51907 / DSM 11121 / KW20 / Rd).